The chain runs to 146 residues: uncharacterized protein (146 aa).

The N-terminal stretch at 1 to 24 is a signal peptide; sequence MVIYYGKKNCTLLLLLFILCNIYS. 2 N-linked (GlcNAc...) asparagine glycosylation sites follow: Asn-99 and Asn-106.

This is an uncharacterized protein from Saccharomyces cerevisiae (strain ATCC 204508 / S288c) (Baker's yeast).